The sequence spans 337 residues: Adenylosuccinate synthetase (337 aa).

GTP contacts are provided by residues 12 to 18 (GDEGKGK) and 42 to 44 (GHT). Catalysis depends on Asp-13, which acts as the Proton acceptor. Asp-13 and Gly-42 together coordinate Mg(2+). IMP contacts are provided by residues 13–16 (DEGK), 40–43 (NAGH), Thr-127, Arg-141, Gln-179, Thr-194, and Arg-256. Residue His-43 is the Proton donor of the active site. 252–258 (TVTGRRR) lines the substrate pocket. GTP is bound by residues Arg-258, 284 to 286 (CLD), and 324 to 326 (STG).

Belongs to the adenylosuccinate synthetase family. Homodimer. Requires Mg(2+) as cofactor.

Its subcellular location is the cytoplasm. It carries out the reaction IMP + L-aspartate + GTP = N(6)-(1,2-dicarboxyethyl)-AMP + GDP + phosphate + 2 H(+). It participates in purine metabolism; AMP biosynthesis via de novo pathway; AMP from IMP: step 1/2. Its function is as follows. Plays an important role in the de novo pathway of purine nucleotide biosynthesis. Catalyzes the first committed step in the biosynthesis of AMP from IMP. The chain is Adenylosuccinate synthetase from Methanococcus maripaludis (strain C6 / ATCC BAA-1332).